The chain runs to 262 residues: Adenosylcobinamide-GDP ribazoletransferase (262 aa).

6 helical membrane-spanning segments follow: residues 43 to 63 (YFGL…WLTQ), 66 to 86 (LPAG…TGGF), 120 to 140 (GALA…ELAL), 146 to 166 (AGSA…SIIF), 191 to 211 (LLIL…LAAL), and 242 to 262 (AAQQ…GNIL).

It belongs to the CobS family. Mg(2+) is required as a cofactor.

It is found in the cell inner membrane. The catalysed reaction is alpha-ribazole + adenosylcob(III)inamide-GDP = adenosylcob(III)alamin + GMP + H(+). The enzyme catalyses alpha-ribazole 5'-phosphate + adenosylcob(III)inamide-GDP = adenosylcob(III)alamin 5'-phosphate + GMP + H(+). It functions in the pathway cofactor biosynthesis; adenosylcobalamin biosynthesis; adenosylcobalamin from cob(II)yrinate a,c-diamide: step 7/7. Joins adenosylcobinamide-GDP and alpha-ribazole to generate adenosylcobalamin (Ado-cobalamin). Also synthesizes adenosylcobalamin 5'-phosphate from adenosylcobinamide-GDP and alpha-ribazole 5'-phosphate. The chain is Adenosylcobinamide-GDP ribazoletransferase from Shewanella baltica (strain OS185).